A 253-amino-acid chain; its full sequence is Protein PET20, mitochondrial (253 aa).

The N-terminal 36 residues, 1–36 (MLKLARPFIPPLSRNNAISSGIVLTSRRFQSSFTFL), are a transit peptide targeting the mitochondrion. The tract at residues 44-93 (KNQMKSKRKKGSKKAAYHRQPPEHEHTAPLIKQNKTITKKEHSDVRGSHL) is disordered. Basic residues predominate over residues 47–60 (MKSKRKKGSKKAAY). A compositionally biased stretch (basic and acidic residues) spans 81-90 (TKKEHSDVRG).

Its subcellular location is the mitochondrion. Its function is as follows. Required for respiratory growth, stability of the mitochondrial genome and for proper assembly or maintenance of mitochondrial proteins. This Saccharomyces cerevisiae (strain ATCC 204508 / S288c) (Baker's yeast) protein is Protein PET20, mitochondrial (PET20).